The following is a 643-amino-acid chain: MADVPADLAAVWPRVLEQLLGEGRGQGVEAKDEHWIRRCQPLALVADTALLAVPNEFAKGVLEGRLAPIVSETLSRECGRPIRIAITVDDSAGEPPPAAPPAQQTPKPRYEEPELPSGPYEGYGRHRGGADQLPGTEPRPEQLPSARPDQLPTVRPAYPSEYHRPEPGAWPRPAQDEYGWQQPRLGFPERDPYASPSSQDAYGSPSQDYRPQGMDRPPYEQQRGDYDTPRAEYEPARPDYDSARPDYESARPEYDQRDPVRRELPEPPAHRGGPGADMPSAGAPGPPAAQPAPASGPGEPTARLNPKYLFDTFVIGASNRFAHAAAVAVAEAPAKAYNPLFIYGESGLGKTHLLHAIGHYARSLYPGTRVRYVSSEEFTNEFINSIRDGKGDSFRKRYREMDILLVDDIQFLADKESTQEEFFHTFNTLHNANKQIVLSSDRPPKQLVTLEDRLRNRFEWGLITDVQPPELETRIAILRKKAVQEQLNAPPEVLEFIASRISRNIRELEGALIRVTAFASLNRQPVDLGLTEIVLKDLIPGGEDSTPEITATAIMAATADYFGLTVDDLCGSSRGRQLVTARQIAMYLCRELTDLSLPKIGAQFGGRDHTTVMHADRKIRALMAERRSIYNQVTELTNRIKNG.

Positions 1 to 97 (MADVPADLAA…VDDSAGEPPP (97 aa)) are domain I, interacts with DnaA modulators. The interval 87-303 (TVDDSAGEPP…ASGPGEPTAR (217 aa)) is disordered. The domain II stretch occupies residues 97-302 (PAAPPAQQTP…PASGPGEPTA (206 aa)). The span at 195–209 (SPSSQDAYGSPSQDY) shows a compositional bias: polar residues. Residues 222 to 269 (QRGDYDTPRAEYEPARPDYDSARPDYESARPEYDQRDPVRRELPEPPA) are compositionally biased toward basic and acidic residues. A compositionally biased stretch (low complexity) spans 291 to 300 (PAPASGPGEP). The tract at residues 303–519 (RLNPKYLFDT…GALIRVTAFA (217 aa)) is domain III, AAA+ region. 4 residues coordinate ATP: G347, G349, K350, and T351. A domain IV, binds dsDNA region spans residues 520–643 (SLNRQPVDLG…TELTNRIKNG (124 aa)).

Belongs to the DnaA family. Oligomerizes as a right-handed, spiral filament on DNA at oriC.

The protein localises to the cytoplasm. Its function is as follows. Plays an essential role in the initiation and regulation of chromosomal replication. ATP-DnaA binds to the origin of replication (oriC) to initiate formation of the DNA replication initiation complex once per cell cycle. Binds the DnaA box (a 9 base pair repeat at the origin) and separates the double-stranded (ds)DNA. Forms a right-handed helical filament on oriC DNA; dsDNA binds to the exterior of the filament while single-stranded (ss)DNA is stabiized in the filament's interior. The ATP-DnaA-oriC complex binds and stabilizes one strand of the AT-rich DNA unwinding element (DUE), permitting loading of DNA polymerase. After initiation quickly degrades to an ADP-DnaA complex that is not apt for DNA replication. Binds acidic phospholipids. This chain is Chromosomal replication initiator protein DnaA, found in Streptomyces reticuli.